Reading from the N-terminus, the 289-residue chain is ATP synthase subunit a (289 aa).

6 helical membrane passes run 43–63 (AFHL…VLIF), 104–124 (IAPL…VDLI), 160–180 (LSVF…GGFI), 193–213 (IFVQ…TLIA), 232–252 (VFIL…GLGV), and 259–279 (AVFH…LTIV).

This sequence belongs to the ATPase A chain family. In terms of assembly, F-type ATPases have 2 components, CF(1) - the catalytic core - and CF(0) - the membrane proton channel. CF(1) has five subunits: alpha(3), beta(3), gamma(1), delta(1), epsilon(1). CF(0) has three main subunits: a(1), b(2) and c(9-12). The alpha and beta chains form an alternating ring which encloses part of the gamma chain. CF(1) is attached to CF(0) by a central stalk formed by the gamma and epsilon chains, while a peripheral stalk is formed by the delta and b chains.

It localises to the cell inner membrane. Functionally, key component of the proton channel; it plays a direct role in the translocation of protons across the membrane. The sequence is that of ATP synthase subunit a from Pseudomonas fluorescens (strain SBW25).